The following is a 296-amino-acid chain: 4-hydroxy-tetrahydrodipicolinate synthase (296 aa).

Residue Thr49 participates in pyruvate binding. Tyr137 serves as the catalytic Proton donor/acceptor. The active-site Schiff-base intermediate with substrate is Lys166. Ile208 contacts pyruvate.

This sequence belongs to the DapA family. In terms of assembly, homotetramer; dimer of dimers.

The protein localises to the cytoplasm. It carries out the reaction L-aspartate 4-semialdehyde + pyruvate = (2S,4S)-4-hydroxy-2,3,4,5-tetrahydrodipicolinate + H2O + H(+). The protein operates within amino-acid biosynthesis; L-lysine biosynthesis via DAP pathway; (S)-tetrahydrodipicolinate from L-aspartate: step 3/4. Functionally, catalyzes the condensation of (S)-aspartate-beta-semialdehyde [(S)-ASA] and pyruvate to 4-hydroxy-tetrahydrodipicolinate (HTPA). This chain is 4-hydroxy-tetrahydrodipicolinate synthase, found in Chlorobium chlorochromatii (strain CaD3).